We begin with the raw amino-acid sequence, 206 residues long: Thymidylate kinase (206 aa).

An ATP-binding site is contributed by 14–21 (GGEGIGKS).

This sequence belongs to the thymidylate kinase family.

It carries out the reaction dTMP + ATP = dTDP + ADP. Phosphorylation of dTMP to form dTDP in both de novo and salvage pathways of dTTP synthesis. This Rickettsia bellii (strain RML369-C) protein is Thymidylate kinase.